Here is a 402-residue protein sequence, read N- to C-terminus: Phosphoglycerate kinase (402 aa).

Substrate is bound by residues 24-26 (DFN), arginine 40, 63-66 (HFGR), arginine 122, and arginine 155. Residues lysine 206, glycine 297, glutamate 328, and 357–360 (GGDS) each bind ATP.

Belongs to the phosphoglycerate kinase family. Monomer.

It localises to the cytoplasm. The catalysed reaction is (2R)-3-phosphoglycerate + ATP = (2R)-3-phospho-glyceroyl phosphate + ADP. Its pathway is carbohydrate degradation; glycolysis; pyruvate from D-glyceraldehyde 3-phosphate: step 2/5. This Parasynechococcus marenigrum (strain WH8102) protein is Phosphoglycerate kinase.